A 28-amino-acid chain; its full sequence is Cyclotide vodo I2 (28 aa).

3 cysteine pairs are disulfide-bonded: Cys-4–Cys-18, Cys-8–Cys-20, and Cys-13–Cys-25.

This is a cyclic peptide. In terms of processing, contains 3 disulfide bonds.

Probably participates in a plant defense mechanism. The polypeptide is Cyclotide vodo I2 (Viola odorata (Sweet violet)).